We begin with the raw amino-acid sequence, 626 residues long: Forkhead box protein O1 (626 aa).

Residues 1-11 are compositionally biased toward pro residues; that stretch reads MAEAPLPPPPG. 4 disordered regions span residues 1–57, 90–142, 218–319, and 484–519; these read MAEA…PAAG, DIRQ…SRRN, SSWW…MPEQ, and PTYG…MTHN. 2 stretches are compositionally biased toward low complexity: residues 37–48 and 101–133; these read NPSSSANSSPAP and QHPQ…AQQP. Positions 144 to 238 form a DNA-binding region, fork-head; that stretch reads WGNLSYADLI…KNGKSPRRRA (95 aa). Residues 248 to 259 show a composition bias toward basic residues; the sequence is AKSRGRAAKKKA. Over residues 262–277 the composition is skewed to low complexity; that stretch reads QSSQDGSSDSPGSQFS. Polar residues-rich tracts occupy residues 298–310 and 484–494; these read RPRT…TISG and PTYGSQPTHNK.

Post-translationally, phosphorylated by AKT1; insulin-induced. In terms of processing, IGF1 rapidly induces phosphorylation of Thr-28, Ser-240 and Ser-303. Phosphorylation of Ser-240 decreases DNA-binding activity and promotes the phosphorylation of Thr-28, and Ser-303, which leads to nuclear exclusion and loss of function. Phosphorylation of Ser-313 is independent of IGF1 and leads to reduced function.

Its subcellular location is the cytoplasm. It is found in the nucleus. Transcription factor that regulates metabolic homeostasis in response to oxidative stress. Binds to the consensus sequence 5'-TT[G/A]TTTTG-3' and the related Daf-16 family binding element (DBE) with consensus sequence 5'-TT[G/A]TTTAC-3'. Main regulator of redox balance and osteoblast numbers and controls bone mass. Orchestrates the endocrine function of the skeleton in regulating glucose metabolism. Also acts as a key regulator of chondrogenic commitment of skeletal progenitor cells in response to lipid availability: when lipids levels are low, translocates to the nucleus and promotes expression of sox9, which induces chondrogenic commitment and suppresses fatty acid oxidation. Acts synergistically with atf4 to suppress osteocalcin/bglap activity, increasing glucose levels and triggering glucose intolerance and insulin insensitivity. Also suppresses the transcriptional activity of runx2, an upstream activator of osteocalcin/bglap. May act as a positive regulator of apoptosis in cardiac smooth muscle cells as a result of its transcriptional activation of pro-apoptotic genes. This Xenopus tropicalis (Western clawed frog) protein is Forkhead box protein O1.